The following is a 118-amino-acid chain: Basic phospholipase A2 PA-10A (118 aa).

7 disulfide bridges follow: Cys-11–Cys-71, Cys-27–Cys-117, Cys-29–Cys-45, Cys-44–Cys-98, Cys-51–Cys-91, Cys-60–Cys-84, and Cys-78–Cys-89. Residues Tyr-28, Gly-30, and Gly-32 each coordinate Ca(2+). His-48 is a catalytic residue. Asp-49 is a Ca(2+) binding site. The active site involves Asp-92.

It belongs to the phospholipase A2 family. Group I subfamily. D49 sub-subfamily. Requires Ca(2+) as cofactor. Expressed by the venom gland.

The protein localises to the secreted. It carries out the reaction a 1,2-diacyl-sn-glycero-3-phosphocholine + H2O = a 1-acyl-sn-glycero-3-phosphocholine + a fatty acid + H(+). Its function is as follows. PLA2 catalyzes the calcium-dependent hydrolysis of the 2-acyl groups in 3-sn-phosphoglycerides. The chain is Basic phospholipase A2 PA-10A from Pseudechis australis (Mulga snake).